Reading from the N-terminus, the 431-residue chain is Glucose-1-phosphate adenylyltransferase (431 aa).

Position 39 (Lys39) interacts with beta-D-fructose 1,6-bisphosphate. AMP is bound by residues Arg40, His46, and Arg52. Tyr114 lines the alpha-D-glucose 1-phosphate pocket. Arg130 is a binding site for AMP. Alpha-D-glucose 1-phosphate is bound by residues Gly179, 194–195 (EK), and Ser212. AMP contacts are provided by Glu370 and Arg386. Beta-D-fructose 1,6-bisphosphate-binding positions include 419–423 (REMLR) and 429–431 (QER).

This sequence belongs to the bacterial/plant glucose-1-phosphate adenylyltransferase family. In terms of assembly, homotetramer.

It catalyses the reaction alpha-D-glucose 1-phosphate + ATP + H(+) = ADP-alpha-D-glucose + diphosphate. Its pathway is glycan biosynthesis; glycogen biosynthesis. Allosterically activated by fructose-1,6-bisphosphate (F16BP) and inhibited by AMP. In terms of biological role, involved in the biosynthesis of ADP-glucose, a building block required for the elongation reactions to produce glycogen. Catalyzes the reaction between ATP and alpha-D-glucose 1-phosphate (G1P) to produce pyrophosphate and ADP-Glc. The sequence is that of Glucose-1-phosphate adenylyltransferase from Shigella dysenteriae serotype 1 (strain Sd197).